The primary structure comprises 445 residues: tRNA modification GTPase MnmE (445 aa).

The (6S)-5-formyl-5,6,7,8-tetrahydrofolate site is built by R20, E79, and K119. Residues 215 to 371 form the TrmE-type G domain; sequence GLKLAIIGPP…ILKNIENIAE (157 aa). N225 contributes to the K(+) binding site. GTP is bound by residues 225 to 230, 244 to 250, and 269 to 272; these read NTGKSS, SNIAGTT, and DTAG. S229 contributes to the Mg(2+) binding site. 3 residues coordinate K(+): S244, I246, and T249. T250 is a Mg(2+) binding site. K445 provides a ligand contact to (6S)-5-formyl-5,6,7,8-tetrahydrofolate.

This sequence belongs to the TRAFAC class TrmE-Era-EngA-EngB-Septin-like GTPase superfamily. TrmE GTPase family. In terms of assembly, homodimer. Heterotetramer of two MnmE and two MnmG subunits. Requires K(+) as cofactor.

The protein localises to the cytoplasm. Functionally, exhibits a very high intrinsic GTPase hydrolysis rate. Involved in the addition of a carboxymethylaminomethyl (cmnm) group at the wobble position (U34) of certain tRNAs, forming tRNA-cmnm(5)s(2)U34. This chain is tRNA modification GTPase MnmE, found in Rickettsia typhi (strain ATCC VR-144 / Wilmington).